A 771-amino-acid polypeptide reads, in one-letter code: Protein translocase subunit SecA 2 (771 aa).

ATP is bound by residues Gln91, Gly109 to Thr113, and Asp496.

This sequence belongs to the SecA family. In terms of assembly, monomer and homodimer. Part of the essential Sec protein translocation apparatus which comprises SecA, SecYEG and auxiliary proteins SecDF. Other proteins may also be involved.

The protein resides in the cell membrane. Its subcellular location is the cytoplasm. It catalyses the reaction ATP + H2O + cellular proteinSide 1 = ADP + phosphate + cellular proteinSide 2.. Functionally, part of the Sec protein translocase complex. Interacts with the SecYEG preprotein conducting channel. Has a central role in coupling the hydrolysis of ATP to the transfer of proteins into and across the cell membrane, serving as an ATP-driven molecular motor driving the stepwise translocation of polypeptide chains across the membrane. This is Protein translocase subunit SecA 2 from Corynebacterium jeikeium (strain K411).